A 493-amino-acid chain; its full sequence is 2-amino-4-deoxychorismate synthase (493 aa).

It belongs to the anthranilate synthase component I family. Requires Mg(2+) as cofactor.

The enzyme catalyses (2S)-2-amino-4-deoxychorismate + L-glutamate = chorismate + L-glutamine. Functionally, converts chorismate to 2-amino-4-deoxychorismate (ADIC). Involved in the biosynthesis of the benzoxazolinate moiety of the enediyne antitumor antibiotic C-1027. This Streptomyces globisporus protein is 2-amino-4-deoxychorismate synthase (sgcD).